The chain runs to 186 residues: MTDPKETINIENVVASTGIGQELDLQSVAMDLEGADYDPEQFPGLVYRTQDPKSAALIFRSGKIVCTGAKSTDDVHESLRIVFDKLRELSIKVEDDPEIVVQNIVTSADLGRQLNLNAIAIGLGLENIEYEPEQFPGLVYRLDDPEVVALLFGSGKLVITGGKEPKDAEHAVDKITSRLEELGLLD.

Tandem repeats lie at residues 10–86 and 101–179.

Belongs to the TBP family.

General factor that plays a role in the activation of archaeal genes transcribed by RNA polymerase. Binds specifically to the TATA box promoter element which lies close to the position of transcription initiation. The chain is TATA-box-binding protein E (tbpE) from Halobacterium salinarum (strain ATCC 700922 / JCM 11081 / NRC-1) (Halobacterium halobium).